Here is a 421-residue protein sequence, read N- to C-terminus: UV-B-induced protein At3g17800, chloroplastic (421 aa).

Disordered stretches follow at residues 1 to 40 (MDALTSSLVRSPIVPSRTSDNGSGSMFLTASGPGFTRSGS) and 74 to 95 (VRASSASNDASSGSSPKPIAPL). Residues 1-75 (MDALTSSLVR…AKTRRSFVVR (75 aa)) constitute a chloroplast transit peptide. Over residues 16-28 (SRTSDNGSGSMFL) the composition is skewed to polar residues. Over residues 74 to 88 (VRASSASNDASSGSS) the composition is skewed to low complexity.

The protein localises to the plastid. It localises to the chloroplast. The sequence is that of UV-B-induced protein At3g17800, chloroplastic from Arabidopsis thaliana (Mouse-ear cress).